The primary structure comprises 311 residues: Methionyl-tRNA formyltransferase (311 aa).

110-113 serves as a coordination point for (6S)-5,6,7,8-tetrahydrofolate; sequence SLLP.

It belongs to the Fmt family.

The enzyme catalyses L-methionyl-tRNA(fMet) + (6R)-10-formyltetrahydrofolate = N-formyl-L-methionyl-tRNA(fMet) + (6S)-5,6,7,8-tetrahydrofolate + H(+). In terms of biological role, attaches a formyl group to the free amino group of methionyl-tRNA(fMet). The formyl group appears to play a dual role in the initiator identity of N-formylmethionyl-tRNA by promoting its recognition by IF2 and preventing the misappropriation of this tRNA by the elongation apparatus. This Streptococcus pyogenes serotype M3 (strain ATCC BAA-595 / MGAS315) protein is Methionyl-tRNA formyltransferase.